The sequence spans 592 residues: Autophagy-related protein 22-1 (592 aa).

The next 4 membrane-spanning stretches (helical) occupy residues 31–51, 108–128, 143–163, and 167–187; these read YGWA…PITL, TASF…VIII, LLIV…VVVP, and LLGG…FVLL. N213 carries N-linked (GlcNAc...) asparagine glycosylation. The next 8 membrane-spanning stretches (helical) occupy residues 271 to 291, 301 to 321, 364 to 384, 398 to 418, 433 to 453, 468 to 490, 502 to 524, and 534 to 554; these read IGIG…VVVV, LVLF…SLWL, IVIF…VSGT, AALG…AFSW, IIAC…GFIP, MYPL…RSFF, FYAL…VGAI, and AFVF…LVDV. Residues 572 to 592 form a disordered region; that stretch reads PQGSEYGAISDDQTTEDPIEE.

This sequence belongs to the ATG22 family.

The protein resides in the vacuole membrane. Functionally, vacuolar effluxer which mediate the efflux of amino acids resulting from autophagic degradation. The release of autophagic amino acids allows the maintenance of protein synthesis and viability during nitrogen starvation. This Penicillium rubens (strain ATCC 28089 / DSM 1075 / NRRL 1951 / Wisconsin 54-1255) (Penicillium chrysogenum) protein is Autophagy-related protein 22-1 (atg22-1).